We begin with the raw amino-acid sequence, 705 residues long: MASTLPPQTWEAGYARPADQASWEAETNYVAESGERAHWMLPVHTEPPTSTIGNGLGLTHLRTWPSIYDGTATGKPEWFKPSKEVDVLICGAGPFGLELGLILARQGISFRIVDKANAPCLSGRADGVHPRALEQLHAWGLAHEVSEEGPILNSTVLFRNGVKLFHGFSSTCDSRYKGIHIITQGQMERIYIRDLLRHQIVVERGTTVQHFNVQSTSQDHPVRATLKNVATGEEEVVRARYLIGADGAASSIREQLGVEFDGITTDIYWAIMDCRFKTDYPHILGFNIIISAEHGGSIVIPREDGYTRFYTQINGEKARKLQANRQARRNASTVGETRIDDHGITPDEVLEQLNKIIAPHKVEFASPMSWFSVWRVSERVARHFSSPDLRVHLGGDAAVLGAFGLNSSIYDAANLGWKLGLVLRKHAEPSILTTYDKERRLFANRVIRCSGAYLRFICNSSLPLAALRDLGEHLESHDENLPLLDGSTEADREFLYTFFKRHAMFLLGVEWPIVNSAICPADTKVRASSLRNGVRAPNPRVCLATDYTAYLYDKMMGVGRFHLLLFGSDLQGPVRQRLAVLAGELRKREGFYERFGGREMFNLILVVKTLSHQTAELLEGDLAPLKDHATTVYDDRAPDDDAHYWYGVNHARGALVVVRPDLAVGVSVWPEEIGKLNKYFASFLLECEETLPTKKSLLARLWDAL.

Residues 86-115 (DVLI…IVDK), valine 208, 308-310 (RFY), and serine 408 contribute to the FAD site.

This sequence belongs to the PheA/TfdB FAD monooxygenase family. FAD is required as a cofactor.

Its pathway is secondary metabolite biosynthesis. Functionally, FAD-dependent monooxygenase; part of the cluster A that mediates the biosynthesis of azasperpyranones, members of the azaphilone family that exhibit anti-cancer activities. Azasperpyranones are synthesized by 2 clusters, A and B. Cluster A is responsible for the production of the polyhydric phenol moiety while the azaphilonoid scaffold is produced by the cluster B. The non-reducing polyketide synthase ATEG_03629 produces 5-methyl orsellinic acid, which is then reduced to 5-methyl orsellinic aldehyde by the NRPS-like protein ATEG_03630. 5-methyl orsellinic aldehyde is then first hydroxylated by the FAD-dependent monooxygenase ATEG_03635 and subsequently hydroxylated by the cytochrome P450 monooxygenase ATEG_03631 to produce the unstable polyhydric phenol precursor of azasperpyranones. On the other hand, the polyketide synthase ATEG_07659 is responsible for producing the 3,5-dimethyloctadienone moiety from acetyl-CoA, three malonyl-CoA, and two S-adenosyl methionines (SAM). The 3,5-dimethyloctadienone moiety is then loaded onto the SAT domain of ATEG_07661 and extended with four malonyl-CoA and one SAM, which leads to the formation of 2,4-dihydroxy-6-(5,7-dimethyl-2-oxo-trans-3-trans-5-nonadienyl)-3-methylbenzaldehyde (compound 8) after reductive release and aldol condensation. The FAD-dependent monooxygenase ATEG_07662 is the next enzyme in the biosynthesis sequence and hydroxylates the side chain at the benzylic position of compound 8. In Aspergillus nidulans, afoF, the ortholog of the FAD-dependent oxygenase ATEG_07660, is the key enzyme for the biosynthesis of asperfuranone by catalyzing the hydroxylation at C-8 of to prevent the formation of a six-membered ring hemiacetal intermediate and thus facilitating the formation of a five-membered ring to produce asperfuranone. In Aspergillus terreus, ATEG_07660 is probably not functional, which leads to the formation of the six-membered ring hemiacetal intermediate presperpyranone instead of asperfuranone. Finally, ATEG_03636 is involved in the condensation of the polyhydric phenol moiety produced by cluster A and the perasperpyranone precursor produced by cluster B, to yield azasperpyranone A. Further modifications of azasperpyranone A result in the production of derivatives, including azasperpyranone B to F. This Aspergillus terreus (strain NIH 2624 / FGSC A1156) protein is FAD-dependent monooxygenase ATEG_03635.